Reading from the N-terminus, the 116-residue chain is Phosphoribosyl-AMP cyclohydrolase (116 aa).

Asp80 lines the Mg(2+) pocket. Residue Cys81 participates in Zn(2+) binding. Asp82 and Asp84 together coordinate Mg(2+). 2 residues coordinate Zn(2+): Cys98 and Cys105.

The protein belongs to the PRA-CH family. In terms of assembly, homodimer. Requires Mg(2+) as cofactor. It depends on Zn(2+) as a cofactor.

It localises to the cytoplasm. It catalyses the reaction 1-(5-phospho-beta-D-ribosyl)-5'-AMP + H2O = 1-(5-phospho-beta-D-ribosyl)-5-[(5-phospho-beta-D-ribosylamino)methylideneamino]imidazole-4-carboxamide. It functions in the pathway amino-acid biosynthesis; L-histidine biosynthesis; L-histidine from 5-phospho-alpha-D-ribose 1-diphosphate: step 3/9. Functionally, catalyzes the hydrolysis of the adenine ring of phosphoribosyl-AMP. The sequence is that of Phosphoribosyl-AMP cyclohydrolase from Trichormus variabilis (strain ATCC 29413 / PCC 7937) (Anabaena variabilis).